The sequence spans 492 residues: Glycogen synthase 1 (492 aa).

An ADP-alpha-D-glucose-binding site is contributed by lysine 15.

It belongs to the glycosyltransferase 1 family. Bacterial/plant glycogen synthase subfamily.

The catalysed reaction is [(1-&gt;4)-alpha-D-glucosyl](n) + ADP-alpha-D-glucose = [(1-&gt;4)-alpha-D-glucosyl](n+1) + ADP + H(+). The protein operates within glycan biosynthesis; glycogen biosynthesis. Its function is as follows. Synthesizes alpha-1,4-glucan chains using ADP-glucose. This chain is Glycogen synthase 1, found in Trichormus variabilis (strain ATCC 29413 / PCC 7937) (Anabaena variabilis).